Reading from the N-terminus, the 179-residue chain is Probable phosphopantothenoylcysteine decarboxylase (179 aa).

Asn-124 lines the substrate pocket. Cys-157 functions as the Proton donor in the catalytic mechanism.

Belongs to the HFCD (homooligomeric flavin containing Cys decarboxylase) superfamily. It depends on FMN as a cofactor.

The enzyme catalyses N-[(R)-4-phosphopantothenoyl]-L-cysteine + H(+) = (R)-4'-phosphopantetheine + CO2. It functions in the pathway cofactor biosynthesis; coenzyme A biosynthesis; CoA from (R)-pantothenate: step 3/5. Functionally, catalyzes the decarboxylation of 4'-phosphopantothenoylcysteine to 4'-phosphopantetheine. This is Probable phosphopantothenoylcysteine decarboxylase (coaC) from Streptococcus mutans serotype c (strain ATCC 700610 / UA159).